The primary structure comprises 2267 residues: Acetyl-CoA carboxylase 1 (2267 aa).

The Biotin carboxylation domain occupies 38-544 (PIHSVLVANN…HTGWLDSRIA (507 aa)). The region spanning 190–384 (PESCNSIPEE…AAQVVVGMGV (195 aa)) is the ATP-grasp domain. 216 to 273 (CQVVGYPAMIKASWGGGGKGIRKVHNDDEVRALFKQVQGEVPGSPIFIMKVASQSRHL) serves as a coordination point for ATP. The Mg(2+) site is built by E339, E353, and N355. Mn(2+) is bound by residues E339, E353, and N355. R357 is a catalytic residue. The Biotinyl-binding domain maps to 671–745 (LQKEHDPSKL…QAADLIARLD (75 aa)). At K712 the chain carries N6-biotinyllysine. Residues 1502–1843 (PYKPLDAIDL…YVGGPLPIMK (342 aa)) form the CoA carboxyltransferase N-terminal domain. Residues 1502-2163 (PYKPLDAIDL…EDALAKEIRE (662 aa)) are carboxyltransferase. The CoA site is built by R1752, K2053, and R2055. In terms of domain architecture, CoA carboxyltransferase C-terminal spans 1847–2163 (PPDRPVTYFP…EDALAKEIRE (317 aa)).

Homodimer. Mg(2+) is required as a cofactor. Mn(2+) serves as cofactor. It depends on biotin as a cofactor.

It is found in the cytoplasm. Its subcellular location is the cytosol. The catalysed reaction is hydrogencarbonate + acetyl-CoA + ATP = malonyl-CoA + ADP + phosphate + H(+). The enzyme catalyses N(6)-biotinyl-L-lysyl-[protein] + hydrogencarbonate + ATP = N(6)-carboxybiotinyl-L-lysyl-[protein] + ADP + phosphate + H(+). Its pathway is lipid metabolism; malonyl-CoA biosynthesis; malonyl-CoA from acetyl-CoA: step 1/1. Its function is as follows. Multifunctional enzyme that catalyzes the carboxylation of acetyl-CoA, forming malonyl-CoA, which is used in the plastid for fatty acid synthesis and in the cytosol in various biosynthetic pathways including fatty acid elongation. The chain is Acetyl-CoA carboxylase 1 (ACC1) from Oryza sativa subsp. japonica (Rice).